The chain runs to 274 residues: Large ribosomal subunit protein uL2cz/uL2cy (274 aa).

Disordered stretches follow at residues 1–25 (MAIHLYKTSTPSTRNGAVDSQVKSN) and 224–274 (NPVD…RRSK).

The protein belongs to the universal ribosomal protein uL2 family. Part of the 50S ribosomal subunit.

The protein localises to the plastid. The protein resides in the chloroplast. In Cucumis sativus (Cucumber), this protein is Large ribosomal subunit protein uL2cz/uL2cy (rpl2-A).